Here is a 308-residue protein sequence, read N- to C-terminus: Ferredoxin--NADP reductase (308 aa).

Residues Glu26, Gln34, Tyr39, Val77, Phe106, Asp266, and Thr306 each coordinate FAD.

Belongs to the ferredoxin--NADP reductase type 2 family. Homodimer. Requires FAD as cofactor.

It catalyses the reaction 2 reduced [2Fe-2S]-[ferredoxin] + NADP(+) + H(+) = 2 oxidized [2Fe-2S]-[ferredoxin] + NADPH. This is Ferredoxin--NADP reductase from Lactobacillus delbrueckii subsp. bulgaricus (strain ATCC 11842 / DSM 20081 / BCRC 10696 / JCM 1002 / NBRC 13953 / NCIMB 11778 / NCTC 12712 / WDCM 00102 / Lb 14).